A 305-amino-acid chain; its full sequence is Fumarylacetoacetate hydrolase domain-containing protein 2 homolog (305 aa).

A divalent metal cation is bound by residues Glu-141, Glu-143, and Asp-172.

Belongs to the FAH family. It depends on Ca(2+) as a cofactor. Mg(2+) serves as cofactor.

Functionally, may have hydrolase activity. In Dictyostelium discoideum (Social amoeba), this protein is Fumarylacetoacetate hydrolase domain-containing protein 2 homolog (fahd2).